We begin with the raw amino-acid sequence, 227 residues long: MFS-type transporter FVEG_08288 (227 aa).

A helical membrane pass occupies residues 8-28; it reads VFLTVLIAIASCSVYILNIAI. A glycan (N-linked (GlcNAc...) asparagine) is linked at N40. Transmembrane regions (helical) follow at residues 43–63, 100–120, 122–142, 164–181, and 188–208; these read TVGL…MAGG, VANT…YYGV, FMVP…HFTL, FVRN…APWM, and YMMT…IWLI.

The protein belongs to the major facilitator superfamily.

Its subcellular location is the membrane. Its function is as follows. MFS-type transporter; part of the Fusarium detoxification of benzoxazolinone cluster 1 (FDB1) involved in the degradation of benzoxazolinones produced by the host plant. Maize, wheat, and rye produce the 2 benzoxazinone phytoanticipins 2,4-dihy-droxy-7-methoxy-1,4-benzoxazin-3-one (DIMBOA) and 2,4-dihydroxy-1,4-benzoxazin-3-one (DIBOA) that, due to their inherent instability once released, spontaneously degrade to the more stable corresponding benzoxazolinones, 6-methoxy-2-benzoxazolinone (MBOA) and 2-benzoxazolinone (BOA), respectively. The polypeptide is MFS-type transporter FVEG_08288 (Gibberella moniliformis (strain M3125 / FGSC 7600) (Maize ear and stalk rot fungus)).